A 162-amino-acid chain; its full sequence is 2-C-methyl-D-erythritol 2,4-cyclodiphosphate synthase (162 aa).

A divalent metal cation contacts are provided by D12 and H14. Residues D12–H14 and H38–S39 each bind 4-CDP-2-C-methyl-D-erythritol 2-phosphate. H46 provides a ligand contact to a divalent metal cation. Residues D60–G62, F65–D69, F143, and R146 each bind 4-CDP-2-C-methyl-D-erythritol 2-phosphate.

This sequence belongs to the IspF family. As to quaternary structure, homotrimer. It depends on a divalent metal cation as a cofactor.

The enzyme catalyses 4-CDP-2-C-methyl-D-erythritol 2-phosphate = 2-C-methyl-D-erythritol 2,4-cyclic diphosphate + CMP. It participates in isoprenoid biosynthesis; isopentenyl diphosphate biosynthesis via DXP pathway; isopentenyl diphosphate from 1-deoxy-D-xylulose 5-phosphate: step 4/6. Functionally, involved in the biosynthesis of isopentenyl diphosphate (IPP) and dimethylallyl diphosphate (DMAPP), two major building blocks of isoprenoid compounds. Catalyzes the conversion of 4-diphosphocytidyl-2-C-methyl-D-erythritol 2-phosphate (CDP-ME2P) to 2-C-methyl-D-erythritol 2,4-cyclodiphosphate (ME-CPP) with a corresponding release of cytidine 5-monophosphate (CMP). The chain is 2-C-methyl-D-erythritol 2,4-cyclodiphosphate synthase from Azoarcus sp. (strain BH72).